The following is a 258-amino-acid chain: MRLLISNDDGVFALGIQTLANRLVQAGHEVTVVCPDRERSATGHGLTLHKPIRAERIEGLFDPAVQVWACSGTPSDCVKLALGTLLPELPDFVLSGINHGPNLGTDVLYSGTVSAAMEGVIEGIPSIALSLASFTARDFEPAAEIAVELLERLPHPSSPKVLLSVNIPPVPKEEIAGIRLTRQGVRRYVDLFDQRVDPRGKPYFWLAGEVVEESEPQEPADSHWCDVDAIRRNYVTVTPLQYDLTHYNSLSQLDHLSR.

Residues Asp-8, Asp-9, Ser-40, and Asn-98 each coordinate a divalent metal cation.

Belongs to the SurE nucleotidase family. The cofactor is a divalent metal cation.

Its subcellular location is the cytoplasm. The enzyme catalyses a ribonucleoside 5'-phosphate + H2O = a ribonucleoside + phosphate. Nucleotidase that shows phosphatase activity on nucleoside 5'-monophosphates. This is 5'-nucleotidase SurE from Synechococcus elongatus (strain ATCC 33912 / PCC 7942 / FACHB-805) (Anacystis nidulans R2).